A 288-amino-acid chain; its full sequence is MSDYIVRATAADANIRAFAVTSKEMVENAREDHMTTPVMTAALGRLLSAGAMMGAMMKGDKDIITLQIQCSGPAKGLTVTADSHGNVKGFAMNPQVELPLNAAGKLDVGGALDLGILTVIKDMGLKEPYSGQCELKTGEIAEDLTYYFATSEQIPSAVGLGVLVDKDQSVKQSGGFIIQLMPFTPEDVVDRLEKKITEIDSVTQMLDRGLTPEQILEEILGDFGLEITDTTETRFHCDCSKERVSRALSTLSKKDLDSIIADGESIEVKCQFCNKAYEFTVDELKEMR.

2 cysteine pairs are disulfide-bonded: C237–C239 and C270–C273.

The protein belongs to the HSP33 family. In terms of processing, under oxidizing conditions two disulfide bonds are formed involving the reactive cysteines. Under reducing conditions zinc is bound to the reactive cysteines and the protein is inactive.

It is found in the cytoplasm. Its function is as follows. Redox regulated molecular chaperone. Protects both thermally unfolding and oxidatively damaged proteins from irreversible aggregation. Plays an important role in the bacterial defense system toward oxidative stress. This Agathobacter rectalis (strain ATCC 33656 / DSM 3377 / JCM 17463 / KCTC 5835 / VPI 0990) (Eubacterium rectale) protein is 33 kDa chaperonin.